We begin with the raw amino-acid sequence, 694 residues long: DNA polymerase eta (694 aa).

In terms of domain architecture, UmuC spans 9 to 258; sequence VALVDMDCFF…MPIRKIRSLG (250 aa). Positions 13 and 14 each coordinate Mg(2+). 2 residues coordinate Mn(2+): Asp13 and Met14. Arg61 is a binding site for a 2'-deoxyribonucleoside 5'-triphosphate. 2 residues coordinate Mg(2+): Asp115 and Glu116. Mn(2+) contacts are provided by Asp115 and Glu116. Glu116 is a catalytic residue. The disordered stretch occupies residues 565–598; sequence DSGPDDGAVKPVSSKAVSTEMNVAGDSPNVLDSP. The segment at 609-643 adopts a UBZ3-type zinc-finger fold; sequence ATEDQVLCEKCDSLVPVWDMPEHTDYHFALELQKS. Zn(2+)-binding residues include Cys616, Cys619, His631, and His635. Positions 651 to 694 are disordered; it reads KPQAIPAVSPQGKRNPKSPSASSSKRLRPHGMQTLESFFKPLTH. Glycyl lysine isopeptide (Lys-Gly) (interchain with G-Cter in ubiquitin) cross-links involve residues Lys663, Lys667, and Lys675. Positions 682 to 689 match the PIP-box motif; the sequence is MQTLESFF. A Glycyl lysine isopeptide (Lys-Gly) (interchain with G-Cter in ubiquitin) cross-link involves residue Lys690.

It belongs to the DNA polymerase type-Y family. Interacts with REV1. Interacts with monoubiquitinated PCNA, but not unmodified PCNA. Interacts with POLI; this interaction targets POLI to the replication machinery. Interacts with PALB2 and BRCA2; the interactions are direct and are required to sustain the recruitment of POLH at blocked replication forks and to stimulate POLH-dependent DNA synthesis on D loop substrates. Interacts (via C-terminus) with TRAIP. Interacts with ubiquitin. Interacts with POLDIP2. Requires Mg(2+) as cofactor. Mn(2+) is required as a cofactor. Post-translationally, monoubiquitinated by RCHY1/PIRH2. Ubiquitination depends on integrity of the UBZ3-type zinc finger domain and is enhanced by TRAIP. Ubiquitination inhibits the ability of PolH to interact with PCNA and to bypass UV-induced lesions. Ubiquitous.

The protein resides in the nucleus. The catalysed reaction is DNA(n) + a 2'-deoxyribonucleoside 5'-triphosphate = DNA(n+1) + diphosphate. Its activity is regulated as follows. The enzyme in complex with the DNA substrate binds a third divalent metal cation. The binding of this third divalent cation, which is coordinated by water molecules and two oxygen atoms from DNA and dNTP, is essential for catalyzing the DNA synthesis. Functionally, DNA polymerase specifically involved in the DNA repair by translesion synthesis (TLS). Due to low processivity on both damaged and normal DNA, cooperates with the heterotetrameric (REV3L, REV7, POLD2 and POLD3) POLZ complex for complete bypass of DNA lesions. Inserts one or 2 nucleotide(s) opposite the lesion, the primer is further extended by the tetrameric POLZ complex. In the case of 1,2-intrastrand d(GpG)-cisplatin cross-link, inserts dCTP opposite the 3' guanine. Particularly important for the repair of UV-induced pyrimidine dimers. Although inserts the correct base, may cause base transitions and transversions depending upon the context. May play a role in hypermutation at immunoglobulin genes. Forms a Schiff base with 5'-deoxyribose phosphate at abasic sites, but does not have any lyase activity, preventing the release of the 5'-deoxyribose phosphate (5'-dRP) residue. This covalent trapping of the enzyme by the 5'-dRP residue inhibits its DNA synthetic activity during base excision repair, thereby avoiding high incidence of mutagenesis. Targets POLI to replication foci. The sequence is that of DNA polymerase eta (Polh) from Mus musculus (Mouse).